Reading from the N-terminus, the 720-residue chain is Fatty acid CoA ligase Acsl3 (720 aa).

A helical; Signal-anchor for type III membrane protein membrane pass occupies residues 21–41; the sequence is ILLYFIHFIISLYTILTYIPF. Topologically, residues 42–720 are cytoplasmic; it reads YFLCESKQEK…ADIERMYGRK (679 aa). Ser683 carries the phosphoserine modification.

It belongs to the ATP-dependent AMP-binding enzyme family. Mg(2+) serves as cofactor.

It is found in the mitochondrion outer membrane. It localises to the peroxisome membrane. The protein resides in the microsome membrane. Its subcellular location is the endoplasmic reticulum membrane. It catalyses the reaction a long-chain fatty acid + ATP + CoA = a long-chain fatty acyl-CoA + AMP + diphosphate. It carries out the reaction (E)-hexadec-2-enoate + ATP + CoA = (2E)-hexadecenoyl-CoA + AMP + diphosphate. The catalysed reaction is (5Z,8Z,11Z,14Z)-eicosatetraenoate + ATP + CoA = (5Z,8Z,11Z,14Z)-eicosatetraenoyl-CoA + AMP + diphosphate. The enzyme catalyses 15-hydroxy-(5Z,8Z,11Z,13E)-eicosatetraenoate + ATP + CoA = 15-hydroxy-(5Z,8Z,11Z,13E)-eicosatetraenoyl-CoA + AMP + diphosphate. It catalyses the reaction 12-hydroxy-(5Z,8Z,10E,14Z)-eicosatetraenoate + ATP + CoA = 12-hydroxy-(5Z,8Z,10E,14Z)-eicosatetraenoyl-CoA + AMP + diphosphate. It carries out the reaction 5-hydroxy-(6E,8Z,11Z,14Z)-eicosatetraenoate + ATP + CoA = 5-hydroxy-(6E,8Z,11Z,14Z)-eicosatetraenoyl-CoA + AMP + diphosphate. The catalysed reaction is 14,15-epoxy-(5Z,8Z,11Z)-eicosatrienoate + ATP + CoA = 14,15-epoxy-(5Z,8Z,11Z)-eicosatrienoyl-CoA + AMP + diphosphate. The enzyme catalyses 11,12-epoxy-(5Z,8Z,14Z)-eicosatrienoate + ATP + CoA = 11,12-epoxy-(5Z,8Z,14Z)-eicosatrienoyl-CoA + AMP + diphosphate. It catalyses the reaction a medium-chain fatty acid + ATP + CoA = a medium-chain fatty acyl-CoA + AMP + diphosphate. It carries out the reaction hexadecanoate + ATP + CoA = hexadecanoyl-CoA + AMP + diphosphate. The catalysed reaction is tetradecanoate + ATP + CoA = tetradecanoyl-CoA + AMP + diphosphate. The enzyme catalyses dodecanoate + ATP + CoA = dodecanoyl-CoA + AMP + diphosphate. It catalyses the reaction octadecanoate + ATP + CoA = octadecanoyl-CoA + AMP + diphosphate. It carries out the reaction eicosanoate + ATP + CoA = eicosanoyl-CoA + AMP + diphosphate. The catalysed reaction is (9Z)-octadecenoate + ATP + CoA = (9Z)-octadecenoyl-CoA + AMP + diphosphate. The enzyme catalyses (9Z)-hexadecenoate + ATP + CoA = (9Z)-hexadecenoyl-CoA + AMP + diphosphate. It catalyses the reaction (9Z,12Z)-octadecadienoate + ATP + CoA = (9Z,12Z)-octadecadienoyl-CoA + AMP + diphosphate. It carries out the reaction (9Z,12Z,15Z)-octadecatrienoate + ATP + CoA = (9Z,12Z,15Z)-octadecatrienoyl-CoA + AMP + diphosphate. The catalysed reaction is (4Z,7Z,10Z,13Z,16Z,19Z)-docosahexaenoate + ATP + CoA = (4Z,7Z,10Z,13Z,16Z,19Z)-docosahexaenoyl-CoA + AMP + diphosphate. The enzyme catalyses (5Z,8Z,11Z,14Z,17Z)-eicosapentaenoate + ATP + CoA = (5Z,8Z,11Z,14Z,17Z)-eicosapentaenoyl-CoA + AMP + diphosphate. It catalyses the reaction a fatty acid + ATP + CoA = a fatty acyl-CoA + AMP + diphosphate. Its function is as follows. Acyl-CoA synthetases (ACSL) activates long-chain fatty acids for both synthesis of cellular lipids, and degradation via beta-oxidation. ACSL3 is required for the incorporation of fatty acids into phosphatidylcholine, the major phospholipid located on the surface of VLDL (very low density lipoproteins). Has mainly an anabolic role in energy metabolism. Mediates hepatic lipogenesis. Preferentially uses myristate, laurate, arachidonate and eicosapentaenoate as substrates. Both isoforms exhibit the same level of activity. This is Fatty acid CoA ligase Acsl3 from Mus musculus (Mouse).